We begin with the raw amino-acid sequence, 93 residues long: Large ribosomal subunit protein uL23cz/uL23cy (93 aa).

This sequence belongs to the universal ribosomal protein uL23 family. As to quaternary structure, part of the 50S ribosomal subunit.

It localises to the plastid. The protein localises to the chloroplast. Its function is as follows. Binds to 23S rRNA. In Eucalyptus globulus subsp. globulus (Tasmanian blue gum), this protein is Large ribosomal subunit protein uL23cz/uL23cy (rpl23-A).